A 373-amino-acid chain; its full sequence is Ribosomal protein uL16 3-hydroxylase (373 aa).

The region spanning 92–219 (PTAALMRPFR…LISGFADYVL (128 aa)) is the JmjC domain. Substrate-binding positions include Ser-114, 125–127 (HLD), Arg-140, and His-187. Positions 125 and 127 each coordinate Fe cation. His-187 is a binding site for Fe cation.

Belongs to the ROX family. RoxA/YcfD subfamily. Homodimer. It depends on Fe(2+) as a cofactor.

It carries out the reaction L-arginyl-[ribosomal protein uL16] + 2-oxoglutarate + O2 = (3R)-3-hydroxy-L-arginyl-[ribosomal protein uL16] + succinate + CO2. In terms of biological role, growth-regulating oxygenase that catalyzes the hydroxylation of ribosomal protein uL16 on 'Arg-81'. This chain is Ribosomal protein uL16 3-hydroxylase (roxA), found in Escherichia coli (strain K12).